The primary structure comprises 394 residues: Envelope glycoprotein D (394 aa).

The N-terminal stretch at 1–25 is a signal peptide; sequence MGGAAARLGAVILFVVIVGLHGVRG. An interaction with TNFRSF14 region spans residues 25-57; sequence GKYALADASLKMADPNRFRGKDLPVPDRLTDPP. At 26-339 the chain is on the virion surface side; it reads KYALADASLK…PYHPPATPNN (314 aa). Zn(2+) is bound at residue histidine 64. Cystine bridges form between cysteine 91/cysteine 214, cysteine 131/cysteine 227, and cysteine 143/cysteine 152. 2 N-linked (GlcNAc...) asparagine; by host glycosylation sites follow: asparagine 119 and asparagine 146. Aspartate 240 is a Zn(2+) binding site. Residues 261–305 form a profusion region; sequence LKIAGWHGPKAPYTSTLLPPELSETPNATQPELAPEDPEDSALLE. The segment at 275-301 is disordered; it reads STLLPPELSETPNATQPELAPEDPEDS. Residue asparagine 287 is glycosylated (N-linked (GlcNAc...) asparagine; by host). Residues 340-364 traverse the membrane as a helical segment; sequence MGLIAGAVGGSLLAALVICGIVYWM. Over 365 to 394 the chain is Intravirion; the sequence is RRRTQKGPKRIRLPHIREDDQPSSHQPLFY. A disordered region spans residues 374–394; that stretch reads RIRLPHIREDDQPSSHQPLFY.

Belongs to the herpesviridae glycoprotein D family. In terms of assembly, homodimer. Interacts with host receptor TNFRSF14. Interacts with host receptor NECTIN1. Interacts (via profusion domain) with gB; this interaction occurs in the absence of gH/gL. Interacts (via profusion domain) with gH/gL heterodimer; this interaction occurs in the absence of gB. Associates with the gB-gH/gL-gD complex. Interacts (via C-terminus) with UL11 tegument protein. Interacts with host RSAD2.

The protein resides in the virion membrane. Its subcellular location is the host Golgi apparatus. In terms of biological role, envelope glycoprotein that binds to the host cell entry receptors NECTIN1, TNFRSF14/HVEM and 3-O-sulfated heparan sulfate, promoting the virus entry into host cells. May trigger fusion with host membrane, by recruiting the fusion machinery composed of gB and gH/gL. This chain is Envelope glycoprotein D (gD), found in Homo sapiens (Human).